The primary structure comprises 50 residues: MARYRCCRSQSQSRCRRRRRRRCRRRRRRCVRRRRVCCRRYTVLRCRRRR.

2 cysteine pairs are disulfide-bonded: C7–C15 and C38–C46.

The protein belongs to the protamine P1 family. In terms of assembly, cross-linked by interchain disulfide bonds around the DNA-helix. Testis.

Its subcellular location is the nucleus. The protein localises to the chromosome. Its function is as follows. Protamines substitute for histones in the chromatin of sperm during the haploid phase of spermatogenesis. They compact sperm DNA into a highly condensed, stable and inactive complex. This chain is Sperm protamine P1 (PRM1), found in Equus asinus (Donkey).